Consider the following 500-residue polypeptide: Cytochrome P450 2D27 (500 aa).

Cysteine 446 is a binding site for heme.

It belongs to the cytochrome P450 family. Heme is required as a cofactor. As to expression, expressed in liver, but not in kidney, small intestine, and brain.

The protein localises to the endoplasmic reticulum membrane. It localises to the microsome membrane. Has bufuralol 1'-hydroxylase and debrisoquine 4-hydroxylase activities. This is Cytochrome P450 2D27 (CYP2D27) from Mesocricetus auratus (Golden hamster).